Here is a 59-residue protein sequence, read N- to C-terminus: Conorfamide-Ep1 (59 aa).

Residues 1-19 (MSGCGFLLLALLLLVTVEA) form the signal peptide. A propeptide spanning residues 20-25 (TKMEKK) is cleaved from the precursor. Ile-43 is modified (isoleucine amide). The propeptide occupies 45–59 (RRDMQSPLLSERLRF).

It belongs to the FARP (FMRFamide related peptide) family. Expressed by the venom duct.

It is found in the secreted. Neurotoxin that is active on vertebrates. When tested at high doses (10 uM), the toxin affects all zebrafish and mouse DRG neurons in culture, which could be an indication of an effect on a widely expressed receptor or ion channel found in both species. At low doses (1 uM), the effects of the toxin are confined to a specific subpopulation of zebrafish and mouse DRG neurons. In vivo, it induces long-lasting dramatic alterations in the locomotor behavior of zebrafish larvae. It rapidly induces hypoactivity and death of larvae at high doses and it causes hyperactivity at lower doses. In zebrafish adults, intramuscular injection causes the decrease of the movements and visited spaces. In mice, intracranial injection causes lethargy and prolonges sleeping phases and reduced movement. The polypeptide is Conorfamide-Ep1 (Conus episcopatus (Bishop's cone)).